A 359-amino-acid polypeptide reads, in one-letter code: Methyltransferase fsa4 (359 aa).

S-adenosyl-L-methionine-binding positions include 198-199 (GG), Asp224, 248-249 (SF), Arg264, and Arg265.

Belongs to the class I-like SAM-binding methyltransferase superfamily. Cation-independent O-methyltransferase family.

The protein operates within mycotoxin biosynthesis. Functionally, methyltransferase; part of the gene cluster that mediates the biosynthesis of HIV-1 integrase inhibitor equisetin and of fusarisetin A, both trans-fused decalin-containing tetramic acids showing also antimicrobial activity. The PKS module of fsa1 together with the enoylreductase fsa3 catalyze the formation of the polyketide unit which is then conjugated to L-serine by the condensation domain of the fsa1 NRPS module. Activity of the Dieckmann cyclase domain (RED) results in release of the Dieckmann product intermediate. Diels-Alderase fsa2 is involved in endo-selective Diels-Alder cycloaddition to form the decalin ring, leading to the production of N-desmethylequisetin also called trichosetin. Subsequent N-methylation is carried out by fsa4 to give equisetin. The enzymatic gene responsible for the conversion of equisetin to fusarisetin A has not been identified yet and is probably located outside of the fsa cluster. This Fusarium sp. (strain FN080326) protein is Methyltransferase fsa4.